The primary structure comprises 448 residues: Asparagine--tRNA ligase (448 aa).

It belongs to the class-II aminoacyl-tRNA synthetase family. In terms of assembly, homodimer.

It localises to the cytoplasm. It carries out the reaction tRNA(Asn) + L-asparagine + ATP = L-asparaginyl-tRNA(Asn) + AMP + diphosphate + H(+). The polypeptide is Asparagine--tRNA ligase (Streptococcus suis (strain 98HAH33)).